The chain runs to 303 residues: Probable cell division protein WhiA (303 aa).

A DNA-binding region (H-T-H motif) is located at residues 272-303; that stretch reads SLQQIADSLDFAITKSGVNHRLRKINKLAEDL.

It belongs to the WhiA family.

Functionally, involved in cell division and chromosome segregation. The protein is Probable cell division protein WhiA of Streptococcus equi subsp. zooepidemicus (strain MGCS10565).